The chain runs to 311 residues: MKETLSGVVTRVTGASYIVETGDGLKVRCRTVPGTVSENEGSNLVAVGDRVEFRPKASETDMAEGVITRVEERRTALVRRREVRRNRSKEKEQVIVANIDQLVLITSFDDPPFNSRLVDRYLVFAESEKLPLLIVVNKIDLDEEGMVEEDLEVYRQLDCNICLVSAEDGRGIEELRELLRDRVSAFSGHSGVGKSTLINLLVGCEELRTAETSGKTGKGVHTTTSSAMFQLPGGGYVIDTPGIREFNLAGITRENLRFYYTEFLRYMPECTFSSCSHTVEPGCAVIAAVESGSIARERYESYLALLDSLAE.

In terms of domain architecture, CP-type G spans 88-246; that stretch reads SKEKEQVIVA…VIDTPGIREF (159 aa). GTP is bound by residues 137-140 and 188-196; these read NKID and GHSGVGKST. Positions 270, 275, 277, and 283 each coordinate Zn(2+).

It belongs to the TRAFAC class YlqF/YawG GTPase family. RsgA subfamily. As to quaternary structure, monomer. Associates with 30S ribosomal subunit, binds 16S rRNA. The cofactor is Zn(2+).

The protein resides in the cytoplasm. Functionally, one of several proteins that assist in the late maturation steps of the functional core of the 30S ribosomal subunit. Helps release RbfA from mature subunits. May play a role in the assembly of ribosomal proteins into the subunit. Circularly permuted GTPase that catalyzes slow GTP hydrolysis, GTPase activity is stimulated by the 30S ribosomal subunit. This chain is Small ribosomal subunit biogenesis GTPase RsgA, found in Chlorobaculum tepidum (strain ATCC 49652 / DSM 12025 / NBRC 103806 / TLS) (Chlorobium tepidum).